Here is a 403-residue protein sequence, read N- to C-terminus: S-adenosylmethionine synthase (403 aa).

His-17 is an ATP binding site. Residue Asp-19 participates in Mg(2+) binding. Glu-45 lines the K(+) pocket. 2 residues coordinate L-methionine: Glu-58 and Gln-104. The tract at residues 104–114 (QSPDIAQGVDT) is flexible loop. ATP-binding positions include 179–181 (DGK), 250–251 (KF), Asp-259, 265–266 (RK), Ala-282, and Lys-286. Asp-259 lines the L-methionine pocket. Residue Lys-290 participates in L-methionine binding.

This sequence belongs to the AdoMet synthase family. Homotetramer; dimer of dimers. Mg(2+) serves as cofactor. Requires K(+) as cofactor.

Its subcellular location is the cytoplasm. It catalyses the reaction L-methionine + ATP + H2O = S-adenosyl-L-methionine + phosphate + diphosphate. It participates in amino-acid biosynthesis; S-adenosyl-L-methionine biosynthesis; S-adenosyl-L-methionine from L-methionine: step 1/1. Catalyzes the formation of S-adenosylmethionine (AdoMet) from methionine and ATP. The overall synthetic reaction is composed of two sequential steps, AdoMet formation and the subsequent tripolyphosphate hydrolysis which occurs prior to release of AdoMet from the enzyme. This chain is S-adenosylmethionine synthase, found in Mycobacterium avium (strain 104).